A 362-amino-acid chain; its full sequence is 3-dehydroquinate synthase (362 aa).

Residues 71-76 (DGEQYK), 105-109 (GVVGD), 129-130 (TT), Lys-142, Lys-151, and 169-172 (CLKT) contribute to the NAD(+) site. The Zn(2+) site is built by Glu-184, His-247, and His-264.

It belongs to the sugar phosphate cyclases superfamily. Dehydroquinate synthase family. Requires Co(2+) as cofactor. Zn(2+) serves as cofactor. NAD(+) is required as a cofactor.

Its subcellular location is the cytoplasm. It carries out the reaction 7-phospho-2-dehydro-3-deoxy-D-arabino-heptonate = 3-dehydroquinate + phosphate. The protein operates within metabolic intermediate biosynthesis; chorismate biosynthesis; chorismate from D-erythrose 4-phosphate and phosphoenolpyruvate: step 2/7. Functionally, catalyzes the conversion of 3-deoxy-D-arabino-heptulosonate 7-phosphate (DAHP) to dehydroquinate (DHQ). The protein is 3-dehydroquinate synthase of Escherichia coli O81 (strain ED1a).